Consider the following 454-residue polypeptide: Rhizobactin siderophore biosynthesis protein RhbE (454 aa).

Residue 7-13 (AGIGIGP) participates in FAD binding.

Belongs to the lysine N(6)-hydroxylase/L-ornithine N(5)-oxygenase family. It depends on FAD as a cofactor.

It functions in the pathway siderophore biosynthesis; rhizobactin biosynthesis. The protein is Rhizobactin siderophore biosynthesis protein RhbE (rhbE) of Rhizobium meliloti (strain 1021) (Ensifer meliloti).